Consider the following 479-residue polypeptide: Probable periplasmic serine endoprotease DegP-like (479 aa).

A signal peptide spans methionine 1–alanine 27. Catalysis depends on charge relay system residues histidine 118, aspartate 148, and serine 221. Substrate contacts are provided by residues glycine 219 to serine 221 and leucine 276 to isoleucine 280. PDZ domains follow at residues leucine 265–glycine 356 and lysine 362–glycine 468. The interval methionine 368–arginine 390 is disordered.

The protein belongs to the peptidase S1C family.

It localises to the periplasm. The enzyme catalyses Acts on substrates that are at least partially unfolded. The cleavage site P1 residue is normally between a pair of hydrophobic residues, such as Val-|-Val.. Functionally, might be efficient in the degradation of transiently denatured and unfolded proteins which accumulate in the periplasm following stress conditions. The protein is Probable periplasmic serine endoprotease DegP-like of Pseudomonas fulva (strain 12-X).